The sequence spans 275 residues: Nitrogenase iron protein 1 (275 aa).

9–16 (GKGGIGKS) serves as a coordination point for ATP. Cys97 provides a ligand contact to [4Fe-4S] cluster. An ADP-ribosylarginine; by dinitrogenase reductase ADP-ribosyltransferase modification is found at Arg100. A [4Fe-4S] cluster-binding site is contributed by Cys132.

The protein belongs to the NifH/BchL/ChlL family. Homodimer. [4Fe-4S] cluster is required as a cofactor. The reversible ADP-ribosylation of Arg-100 inactivates the nitrogenase reductase and regulates nitrogenase activity.

The catalysed reaction is N2 + 8 reduced [2Fe-2S]-[ferredoxin] + 16 ATP + 16 H2O = H2 + 8 oxidized [2Fe-2S]-[ferredoxin] + 2 NH4(+) + 16 ADP + 16 phosphate + 6 H(+). Its function is as follows. The key enzymatic reactions in nitrogen fixation are catalyzed by the nitrogenase complex, which has 2 components: the iron protein and the molybdenum-iron protein. This Methanosarcina barkeri protein is Nitrogenase iron protein 1 (nifH1).